The sequence spans 289 residues: Release factor glutamine methyltransferase (289 aa).

S-adenosyl-L-methionine-binding positions include 122–126, aspartate 145, tryptophan 174, and asparagine 189; that span reads GVGSG. 189–192 contacts substrate; sequence NPPY.

Belongs to the protein N5-glutamine methyltransferase family. PrmC subfamily.

The enzyme catalyses L-glutaminyl-[peptide chain release factor] + S-adenosyl-L-methionine = N(5)-methyl-L-glutaminyl-[peptide chain release factor] + S-adenosyl-L-homocysteine + H(+). In terms of biological role, methylates the class 1 translation termination release factors RF1/PrfA and RF2/PrfB on the glutamine residue of the universally conserved GGQ motif. This is Release factor glutamine methyltransferase from Caulobacter vibrioides (strain ATCC 19089 / CIP 103742 / CB 15) (Caulobacter crescentus).